The primary structure comprises 387 residues: Lymphocyte transmembrane adapter 1 (387 aa).

At 1–37 the chain is on the extracellular side; it reads MDVTTSAWSETTRRISEPSTLQGTLGSLDKAEDHSSS. A helical; Signal-anchor for type III membrane protein membrane pass occupies residues 38 to 58; that stretch reads IFSGFAALLAILLVVAVICVL. The Cytoplasmic segment spans residues 59-387; it reads WCCGKRKKRQ…VCAAEAGARG (329 aa). The interval 114-136 is disordered; it reads VSTESLLSRNSDSPSSEHVPSRA. A compositionally biased stretch (low complexity) spans 118–129; sequence SLLSRNSDSPSS. At Tyr195 the chain carries Phosphotyrosine. Positions 230–268 are disordered; sequence SEEIDEGCGNASDCTSLGSPGTENSDPLSDGEGSSQTSN. A compositionally biased stretch (polar residues) spans 241 to 268; the sequence is SDCTSLGSPGTENSDPLSDGEGSSQTSN. 2 positions are modified to phosphotyrosine: Tyr270 and Tyr296. The interval 294-387 is disordered; it reads RDYENVPPGP…VCAAEAGARG (94 aa). A compositionally biased stretch (basic and acidic residues) spans 319–329; that stretch reads DHVEGRTDGPE. Acidic residues predominate over residues 360-369; the sequence is PWEDAEETSS. A Phosphotyrosine modification is found at Tyr375.

As to quaternary structure, when phosphorylated, interacts with GRB2, PIK3R1 and GRAP2. Phosphorylated on tyrosines upon TCR or BCR activation; which leads to the recruitment of GRB2, PIK3R1 and GRAP2.

Its subcellular location is the cell membrane. Functionally, negatively regulates TCR (T-cell antigen receptor)-mediated signaling in T-cells and BCR (B-cell antigen receptor)-mediated signaling in B-cells. This chain is Lymphocyte transmembrane adapter 1 (LAX1), found in Bos taurus (Bovine).